Reading from the N-terminus, the 655-residue chain is MKRTIKYLSFLGLIPFLSITTISCVKQAKENNNKNQLISQFKQLIFILNSFDLDNKKLESKIIKAIEKSDFNKISNINLELTIKFLTRIKNELETKTISQLNKNDKLDILTKIKVHLGSLNLIELVNIVDELVNKLNQKEEIKNTHKDKIEKNKDNIEDIDDSKLEILESKYIPNQHNYPDYVKNFKTVSAEEIYKELYDRTFSIKFLVKLKDGGLLSNGTGTGWLLDYHKYSNTNKYKMFIATNLHVLADFSNSLTDEQNKEFNYYDPSGNKVIGLGLGKADNVTDFSRKNNNSKSENNIANYYLNNQDFENYLKNDFWSVNKFSKGISEPKIVFGAVDFMKDRAIKNHYEALQKEAINYYNYKKNNNEINDDNKIAWNNFLNNKDIPIMIDFAVFEFDVDLDLVDYNLKSWISNAISGLDNYLDRLNKAPILPNQDKKISKYLQTTDYVSALFKKDKSEQNLYNAKDIYIAGYPTSQYSRSVWMQNNPIERNSSTLTSNWRSPTNDKTFAFANEVEEKAGTGLNFNIHDNYWHRVFATFYGYQYNINFSSLYYGASGSLAYNEFGQMIGIYNNVKSNVEFGDLLQSATIAPFLQSDNIKVGDNIIYAYNLIDGTDKTKYKYQKSSFRENLQKLYPNGFSDGLKSTKLFDDIFN.

A signal peptide spans 1–23; it reads MKRTIKYLSFLGLIPFLSITTIS. Residue cysteine 24 is the site of N-palmitoyl cysteine attachment. The S-diacylglycerol cysteine moiety is linked to residue cysteine 24.

The protein belongs to the MG067/MG068/MG395 family.

It is found in the cell membrane. This is an uncharacterized protein from Mycoplasma capricolum subsp. capricolum (strain California kid / ATCC 27343 / NCTC 10154).